The sequence spans 382 residues: Mannosyl phosphorylinositol ceramide synthase SUR1 (382 aa).

At 1–6 (MRKELK) the chain is on the cytoplasmic side. Residues 7–27 (YLICFNILLLLSIIYYTFDLL) traverse the membrane as a helical segment. Over 28–269 (TLCIDDTVKD…KALENHILSC (242 aa)) the chain is Extracellular. A helical membrane pass occupies residues 270-290 (VVTGFIFGFFILYGEFTFYCW). At 291–382 (LCSKNFSNLT…SKYSLGNNSS (92 aa)) the chain is on the cytoplasmic side. Residue serine 349 is modified to Phosphoserine.

Belongs to the glycosyltransferase 32 family. In terms of assembly, heterodimer of SUR1 and CSG2.

Its subcellular location is the membrane. It carries out the reaction a 1D-myo-inositol-1-phospho-N-[(R)-2-hydroxy-very-long-chain fatty acyl]-(R)-4-hydroxysphingoid base + GDP-alpha-D-mannose = an alpha-D-mannosyl-(1&lt;-&gt;6)-1D-myo-inositol-1-phospho-N-[(R)-2-hydroxy-very-long-chain fatty acyl]-(R)-4-hydroxysphingoid base + GDP + H(+). Functionally, involved in the synthesis of mannosyl phosphorylinositol ceramide. Catalyzes the addition of mannosyl to phosphorylinositol ceramide. Suppressor of RVS161 mutation. The protein is Mannosyl phosphorylinositol ceramide synthase SUR1 of Saccharomyces cerevisiae (strain ATCC 204508 / S288c) (Baker's yeast).